The sequence spans 457 residues: uncharacterized protein (457 aa).

In terms of domain architecture, TRAM spans 5-63 (PVEEGQKFPLTIRRMGINGEGIGYFKKAVVFVPGAITGEEVVVEAVKVRDRFTEAKLNK). Residues Cys-76, Cys-82, Cys-85, and Cys-166 each contribute to the [4Fe-4S] cluster site. S-adenosyl-L-methionine is bound by residues Gln-290, Tyr-319, Asp-340, and Asp-388. Cys-415 functions as the Nucleophile in the catalytic mechanism.

It belongs to the class I-like SAM-binding methyltransferase superfamily. RNA M5U methyltransferase family.

This is an uncharacterized protein from Listeria innocua serovar 6a (strain ATCC BAA-680 / CLIP 11262).